The following is a 179-amino-acid chain: NADH dehydrogenase [ubiquinone] 1 beta subcomplex subunit 9 (179 aa).

Ala-2 bears the N-acetylalanine mark. Ser-85 is modified (phosphoserine). A disordered region spans residues 139–160 (QLQEETPVGGPRTEALPPARKQ).

Belongs to the complex I LYR family. As to quaternary structure, mammalian complex I is composed of 45 different subunits.

It localises to the mitochondrion inner membrane. Functionally, accessory subunit of the mitochondrial membrane respiratory chain NADH dehydrogenase (Complex I), that is believed to be not involved in catalysis. Complex I functions in the transfer of electrons from NADH to the respiratory chain. The immediate electron acceptor for the enzyme is believed to be ubiquinone. In Bos taurus (Bovine), this protein is NADH dehydrogenase [ubiquinone] 1 beta subcomplex subunit 9 (NDUFB9).